Here is a 188-residue protein sequence, read N- to C-terminus: Elongation factor P-like protein (188 aa).

This sequence belongs to the elongation factor P family.

The protein is Elongation factor P-like protein of Xylella fastidiosa (strain M23).